The chain runs to 197 residues: ATP synthase subunit delta (197 aa).

The span at 1–16 shows a compositional bias: low complexity; sequence MSSAVSASPQAASPQQ. Residues 1 to 20 form a disordered region; that stretch reads MSSAVSASPQAASPQQDRTS.

This sequence belongs to the ATPase delta chain family. F-type ATPases have 2 components, F(1) - the catalytic core - and F(0) - the membrane proton channel. F(1) has five subunits: alpha(3), beta(3), gamma(1), delta(1), epsilon(1). F(0) has three main subunits: a(1), b(2) and c(10-14). The alpha and beta chains form an alternating ring which encloses part of the gamma chain. F(1) is attached to F(0) by a central stalk formed by the gamma and epsilon chains, while a peripheral stalk is formed by the delta and b chains.

The protein resides in the cell inner membrane. In terms of biological role, f(1)F(0) ATP synthase produces ATP from ADP in the presence of a proton or sodium gradient. F-type ATPases consist of two structural domains, F(1) containing the extramembraneous catalytic core and F(0) containing the membrane proton channel, linked together by a central stalk and a peripheral stalk. During catalysis, ATP synthesis in the catalytic domain of F(1) is coupled via a rotary mechanism of the central stalk subunits to proton translocation. Its function is as follows. This protein is part of the stalk that links CF(0) to CF(1). It either transmits conformational changes from CF(0) to CF(1) or is implicated in proton conduction. This chain is ATP synthase subunit delta, found in Acidiphilium cryptum (strain JF-5).